A 511-amino-acid chain; its full sequence is Histidine ammonia-lyase (511 aa).

Residues 144–146 (ASG) constitute a cross-link (5-imidazolinone (Ala-Gly)). Residue Ser145 is modified to 2,3-didehydroalanine (Ser).

The protein belongs to the PAL/histidase family. In terms of processing, contains an active site 4-methylidene-imidazol-5-one (MIO), which is formed autocatalytically by cyclization and dehydration of residues Ala-Ser-Gly.

The protein resides in the cytoplasm. The enzyme catalyses L-histidine = trans-urocanate + NH4(+). The protein operates within amino-acid degradation; L-histidine degradation into L-glutamate; N-formimidoyl-L-glutamate from L-histidine: step 1/3. The protein is Histidine ammonia-lyase of Halalkalibacterium halodurans (strain ATCC BAA-125 / DSM 18197 / FERM 7344 / JCM 9153 / C-125) (Bacillus halodurans).